Here is a 278-residue protein sequence, read N- to C-terminus: Phage-like element PBSX protein XkdB (278 aa).

Positions 58–80 (LKAREMAAVFGVSEKTVRRWLEL) form a DNA-binding region, H-T-H motif. Disordered regions lie at residues 117-136 (SLKERPFSPQTPDTNDRTDI) and 239-278 (QHERMKKHDKTNNRTDFGRAEKRETSITGGQTGRIRRKQV). Positions 248-263 (KTNNRTDFGRAEKRET) are enriched in basic and acidic residues.

To B.subtilis YqaL.

This is Phage-like element PBSX protein XkdB (xkdB) from Bacillus subtilis (strain 168).